A 551-amino-acid polypeptide reads, in one-letter code: Alkaline nuclease (551 aa).

This sequence belongs to the herpesviridae alkaline nuclease family. Interacts with major DNA-binding protein; this interaction increases the nuclease processivity of the alkaline exonuclease.

Its subcellular location is the host nucleus. It is found in the host cytoplasm. Functionally, plays a role in processing non linear or branched viral DNA intermediates in order to promote the production of mature packaged unit-length linear progeny viral DNA molecules. Exhibits endonuclease and exonuclease activities and accepts both double-stranded and single-stranded DNA as substrate. Exonuclease digestion of DNA is in the 5'-&gt; 3' direction and the products are 5'-monophosphate nucleosides. Additionally, forms a recombinase with the major DNA-binding protein, which displays strand exchange activity. This Homo sapiens (Human) protein is Alkaline nuclease.